A 157-amino-acid chain; its full sequence is MNINATLFGQMVTFALLVWFTMKYVWPPLLQALEERKKKIAEGLAAAEKGKHEMELAEKRATAALKEAKDQAAEIVNQAQKRANALVDESKEAAKIEGERILANARSEIDRELENAKEELRKQVSALAISAAEKILQREVDQKKHKEILAGLGKQLG.

Residues 7–29 (LFGQMVTFALLVWFTMKYVWPPL) form a helical membrane-spanning segment.

This sequence belongs to the ATPase B chain family. In terms of assembly, F-type ATPases have 2 components, F(1) - the catalytic core - and F(0) - the membrane proton channel. F(1) has five subunits: alpha(3), beta(3), gamma(1), delta(1), epsilon(1). F(0) has three main subunits: a(1), b(2) and c(10-14). The alpha and beta chains form an alternating ring which encloses part of the gamma chain. F(1) is attached to F(0) by a central stalk formed by the gamma and epsilon chains, while a peripheral stalk is formed by the delta and b chains.

The protein localises to the cell inner membrane. F(1)F(0) ATP synthase produces ATP from ADP in the presence of a proton or sodium gradient. F-type ATPases consist of two structural domains, F(1) containing the extramembraneous catalytic core and F(0) containing the membrane proton channel, linked together by a central stalk and a peripheral stalk. During catalysis, ATP synthesis in the catalytic domain of F(1) is coupled via a rotary mechanism of the central stalk subunits to proton translocation. Its function is as follows. Component of the F(0) channel, it forms part of the peripheral stalk, linking F(1) to F(0). In Methylococcus capsulatus (strain ATCC 33009 / NCIMB 11132 / Bath), this protein is ATP synthase subunit b 1.